The sequence spans 83 residues: Small ribosomal subunit protein uS17 (83 aa).

This sequence belongs to the universal ribosomal protein uS17 family. As to quaternary structure, part of the 30S ribosomal subunit.

In terms of biological role, one of the primary rRNA binding proteins, it binds specifically to the 5'-end of 16S ribosomal RNA. The sequence is that of Small ribosomal subunit protein uS17 from Campylobacter curvus (strain 525.92).